The following is a 453-amino-acid chain: Tubulin delta chain (453 aa).

A GTP-binding site is contributed by 143–149 (AGGTGSG).

The protein belongs to the tubulin family. Found in a complex with TEDC1, TEDC2, TUBE1 and TUBD1.

The protein localises to the nucleus. It localises to the cytoplasm. Its subcellular location is the cytoskeleton. It is found in the microtubule organizing center. The protein resides in the centrosome. The protein localises to the centriole. It localises to the cell projection. Its subcellular location is the cilium. In terms of biological role, acts as a positive regulator of hedgehog signaling and regulates ciliary function. This is Tubulin delta chain (TUBD1) from Canis lupus familiaris (Dog).